The following is a 409-amino-acid chain: TAR DNA-binding protein 43 (409 aa).

2 consecutive RRM domains span residues 105-200 and 191-262; these read SDLI…RCTE and RKVF…TAEP. 2 disordered regions span residues 260-302 and 341-409; these read AEPK…NQGG and SQQN…GWGM. Over residues 261-274 the composition is skewed to basic and acidic residues; it reads EPKHNNNRQLERGG. Residues 281 to 292 show a composition bias toward polar residues; it reads FGNQGYPNSRPS. Composition is skewed to low complexity over residues 341-387 and 395-409; these read SQQN…PNAG and GFSSSMESKSSGWGM.

Homodimer.

It is found in the nucleus. It localises to the cytoplasm. The protein localises to the stress granule. Its subcellular location is the mitochondrion. Functionally, probably involved in transcriptional repression. May play a role in the maintenance of the circadian clock periodicity. The chain is TAR DNA-binding protein 43 (tardbp) from Xenopus tropicalis (Western clawed frog).